Consider the following 960-residue polypeptide: Valine--tRNA ligase (960 aa).

A 'HIGH' region motif is present at residues 42–52 (PNITGNLHMGH). The 'KMSKS' region motif lies at 553–557 (KMSKS). Position 556 (lysine 556) interacts with ATP. Residues 879–950 (VLKAIDKEIE…LSQQLESLHD (72 aa)) are a coiled coil.

This sequence belongs to the class-I aminoacyl-tRNA synthetase family. ValS type 1 subfamily. As to quaternary structure, monomer.

The protein resides in the cytoplasm. The catalysed reaction is tRNA(Val) + L-valine + ATP = L-valyl-tRNA(Val) + AMP + diphosphate. In terms of biological role, catalyzes the attachment of valine to tRNA(Val). As ValRS can inadvertently accommodate and process structurally similar amino acids such as threonine, to avoid such errors, it has a 'posttransfer' editing activity that hydrolyzes mischarged Thr-tRNA(Val) in a tRNA-dependent manner. This chain is Valine--tRNA ligase, found in Buchnera aphidicola subsp. Schizaphis graminum (strain Sg).